The sequence spans 359 residues: MADLPAKQTALTFQDDGTLGISHDAPVAELKPDMIIVKTAAVSVNPVDTKMESGFAKAGSIGGCDFAGTVVAVGAAVRRPVKVGDRVTGAVMGSDPNDPSSGSFATYVSAPADITLTLPESVPWAVGTSLSTVWFTVGQALFHHLLPDLAVTPSSPYAGDKPITVLVYGGSTSVGTAAIQLLKLAGLRPVTTCSPRNFDLVKSYGAEEAYDYRSPTCAADIKAATKSNLKYALDCITTKDSIAICYAALGRAGGRYTALDPYWEATAATRKTVKANWTLGITMLGKDIAWPAPYGRPGSEDARAFGAKWAAELQALLESGKMRPHPLRAKEGASWEDVLAGLKEVKEGKVSGEKLVFVF.

Tyr-212, Leu-259, and Thr-278 together coordinate NADP(+).

This sequence belongs to the zinc-containing alcohol dehydrogenase family. As to quaternary structure, monomer.

The protein operates within secondary metabolite biosynthesis. Trans-enoyl reductase; part of the gene cluster that mediates the biosynthesis of macrophasetins, 3-decalinoyltetramic acids (DTAs) which feature a tetramate (pyrrolidine-2,4-dione) unit connected to a decalin fragment and that have potent bioactivities. The PKS-NRPS mpsA together with its associated enoylreductase partner mpsG incorporate one unit of acetyl-CoA, seven units of malonyl-CoA, and one unit of L-alanine to assemble the linear tetramic acid intermediate corresponding to the backbone of macrophasetins. Without the Diels-Alderase mpsD, the mpsA/G product can undergo the non-enzymatic intramolecular Diels-Alder (IMDA) reaction to generate both macrophasetin A and macrophasetin B. Catalyzed by mpsD, the linear tetramic acid intermediate is thoroughly converted to macrophasetin A via the endo-IMDA reaction in a regioselective and stereoselective manner. Finally, the cytochrome P450 monooxygenase mpsF catalyzes the hydroxylation at C20 to yield the end product macrophasetin C. The polypeptide is Trans-enoyl reductase mpsG (Macrophomina phaseolina (strain MS6) (Charcoal rot fungus)).